Here is a 528-residue protein sequence, read N- to C-terminus: Negative elongation factor A (528 aa).

One can recognise an HDAg domain in the interval 89–248 (WVLMVADILK…TPIPPSRTLL (160 aa)). An NELF-C/D-binding region spans residues 125-188 (REKVGECEAS…LQKSTETAQQ (64 aa)). The residue at position 157 (Thr-157) is a Phosphothreonine. Positions 189–248 (LKRSAGVPFHAKGRGLLRKMDTTTPLKGIPKQAPFRSPTAPSVFSPTGNRTPIPPSRTLL) are RNAPII-binding. The disordered stretch occupies residues 215 to 245 (KGIPKQAPFRSPTAPSVFSPTGNRTPIPPSR). Ser-225 and Ser-233 each carry phosphoserine. The span at 227–238 (TAPSVFSPTGNR) shows a compositional bias: polar residues. Thr-277 is modified (phosphothreonine). The span at 320–341 (PSTSYLPSTPSVVPASSYIPSS) shows a compositional bias: low complexity. The interval 320-409 (PSTSYLPSTP…PPAVAPTTQT (90 aa)) is disordered. Ser-363 carries the post-translational modification Phosphoserine.

Belongs to the NELF-A family. In terms of assembly, the NELF complex is composed of NELFA, NELFB, NELFCD (isoform NELF-C or isoform NELF-D) and NELFE; NELFA and NELFCD form a stable subcomplex that binds to the N-terminus of NELFB. In vitro, the NELFA:NELFCD subcomplex binds to ssDNA and ssRNA in a sequence- and structure-dependent manner. Interacts with the RNA polymerase II complex when it is not phosphorylated by P-TEFb. In terms of tissue distribution, ubiquitous. Expressed in heart, brain, placenta, liver, skeletal muscle, kidney and pancreas. Expressed at lower level in adult lung. Expressed in fetal brain, lung, liver and kidney.

It localises to the nucleus. In terms of biological role, essential component of the NELF complex, a complex that negatively regulates the elongation of transcription by RNA polymerase II. The NELF complex, which acts via an association with the DSIF complex and causes transcriptional pausing, is counteracted by the P-TEFb kinase complex. Functionally, (Microbial infection) The NELF complex is involved in HIV-1 latency possibly involving recruitment of PCF11 to paused RNA polymerase II. This is Negative elongation factor A (NELFA) from Homo sapiens (Human).